The chain runs to 225 residues: Enolase-phosphatase E1 (225 aa).

This sequence belongs to the HAD-like hydrolase superfamily. MasA/MtnC family. As to quaternary structure, monomer. Mg(2+) serves as cofactor.

It catalyses the reaction 5-methylsulfanyl-2,3-dioxopentyl phosphate + H2O = 1,2-dihydroxy-5-(methylsulfanyl)pent-1-en-3-one + phosphate. It participates in amino-acid biosynthesis; L-methionine biosynthesis via salvage pathway; L-methionine from S-methyl-5-thio-alpha-D-ribose 1-phosphate: step 3/6. Its pathway is amino-acid biosynthesis; L-methionine biosynthesis via salvage pathway; L-methionine from S-methyl-5-thio-alpha-D-ribose 1-phosphate: step 4/6. In terms of biological role, bifunctional enzyme that catalyzes the enolization of 2,3-diketo-5-methylthiopentyl-1-phosphate (DK-MTP-1-P) into the intermediate 2-hydroxy-3-keto-5-methylthiopentenyl-1-phosphate (HK-MTPenyl-1-P), which is then dephosphorylated to form the acireductone 1,2-dihydroxy-3-keto-5-methylthiopentene (DHK-MTPene). In Shewanella woodyi (strain ATCC 51908 / MS32), this protein is Enolase-phosphatase E1.